The following is a 389-amino-acid chain: GDSL esterase/lipase At1g28570 (389 aa).

The signal sequence occupies residues 1 to 25; the sequence is MATLFMKLVSFFLILSTFCLTTVNS. S41 (nucleophile) is an active-site residue. N-linked (GlcNAc...) asparagine glycans are attached at residues N137 and N319. Active-site residues include D344 and H347.

Belongs to the 'GDSL' lipolytic enzyme family.

The protein resides in the secreted. In Arabidopsis thaliana (Mouse-ear cress), this protein is GDSL esterase/lipase At1g28570.